We begin with the raw amino-acid sequence, 141 residues long: Large ribosomal subunit protein uL11 (141 aa).

It belongs to the universal ribosomal protein uL11 family. As to quaternary structure, part of the ribosomal stalk of the 50S ribosomal subunit. Interacts with L10 and the large rRNA to form the base of the stalk. L10 forms an elongated spine to which L12 dimers bind in a sequential fashion forming a multimeric L10(L12)X complex. Post-translationally, one or more lysine residues are methylated.

Its function is as follows. Forms part of the ribosomal stalk which helps the ribosome interact with GTP-bound translation factors. The sequence is that of Large ribosomal subunit protein uL11 from Streptococcus suis (strain 98HAH33).